We begin with the raw amino-acid sequence, 418 residues long: Putative methylthiotransferase jhp_0270 (418 aa).

One can recognise an MTTase N-terminal domain in the interval 2 to 110 (KKVYFKTFGC…INALLQEKKR (109 aa)). [4Fe-4S] cluster is bound by residues C11, C45, C74, C144, C148, and C151. The Radical SAM core domain maps to 130–355 (FVGKTRAFIK…KDLIFHKNKA (226 aa)).

Belongs to the methylthiotransferase family. The cofactor is [4Fe-4S] cluster.

The protein is Putative methylthiotransferase jhp_0270 of Helicobacter pylori (strain J99 / ATCC 700824) (Campylobacter pylori J99).